The primary structure comprises 302 residues: Vacuolar iron transporter (302 aa).

The Cytoplasmic segment spans residues Met1–Lys70. A helical transmembrane segment spans residues Ala71–Val91. Residues Gly92 to Gln99 lie on the Vacuolar side of the membrane. The helical transmembrane segment at Val100–Tyr120 threads the bilayer. At Val121–Ala211 the chain is on the cytoplasmic side. Fe cation contacts are provided by Glu137, Glu140, Glu148, Glu151, Met185, and Glu189. A helical transmembrane segment spans residues Phe212–Leu232. At Gly233 to Glu235 the chain is on the vacuolar side. The chain crosses the membrane as a helical span at residues Ala236–Phe256. The Cytoplasmic segment spans residues Ser257 to Asn276. Residues Gly277–Ala297 traverse the membrane as a helical segment. The Vacuolar portion of the chain corresponds to Asn298–Ala302.

This sequence belongs to the CCC1 family.

Its subcellular location is the vacuole membrane. It carries out the reaction Fe(2+)(in) = Fe(2+)(out). Its function is as follows. Vacuolar iron transporter involved in the transfer of iron ions from the cytosol to the vacuole for intracellular iron storage. Plays an essential role in detoxification of excess iron. Important for parasite survival within macrophages and parasite virulence in vivo. This is Vacuolar iron transporter from Toxoplasma gondii (strain ATCC 50861 / VEG).